The sequence spans 157 residues: Ribosomal RNA large subunit methyltransferase H (157 aa).

S-adenosyl-L-methionine is bound by residues L73, G105, and 124 to 129 (MSKMTF).

Belongs to the RNA methyltransferase RlmH family. In terms of assembly, homodimer.

Its subcellular location is the cytoplasm. It carries out the reaction pseudouridine(1915) in 23S rRNA + S-adenosyl-L-methionine = N(3)-methylpseudouridine(1915) in 23S rRNA + S-adenosyl-L-homocysteine + H(+). In terms of biological role, specifically methylates the pseudouridine at position 1915 (m3Psi1915) in 23S rRNA. This is Ribosomal RNA large subunit methyltransferase H from Bacteroides fragilis (strain ATCC 25285 / DSM 2151 / CCUG 4856 / JCM 11019 / LMG 10263 / NCTC 9343 / Onslow / VPI 2553 / EN-2).